Reading from the N-terminus, the 207-residue chain is Small ribosomal subunit protein eS1 (207 aa).

The protein belongs to the eukaryotic ribosomal protein eS1 family.

The polypeptide is Small ribosomal subunit protein eS1 (Methanosarcina barkeri (strain Fusaro / DSM 804)).